A 601-amino-acid polypeptide reads, in one-letter code: uncharacterized protein (601 aa).

A signal peptide spans M1–A24.

Its subcellular location is the membrane. This is an uncharacterized protein from Schizosaccharomyces pombe (strain 972 / ATCC 24843) (Fission yeast).